A 486-amino-acid polypeptide reads, in one-letter code: Aspartyl/glutamyl-tRNA(Asn/Gln) amidotransferase subunit B (486 aa).

This sequence belongs to the GatB/GatE family. GatB subfamily. As to quaternary structure, heterotrimer of A, B and C subunits.

The catalysed reaction is L-glutamyl-tRNA(Gln) + L-glutamine + ATP + H2O = L-glutaminyl-tRNA(Gln) + L-glutamate + ADP + phosphate + H(+). It catalyses the reaction L-aspartyl-tRNA(Asn) + L-glutamine + ATP + H2O = L-asparaginyl-tRNA(Asn) + L-glutamate + ADP + phosphate + 2 H(+). Allows the formation of correctly charged Asn-tRNA(Asn) or Gln-tRNA(Gln) through the transamidation of misacylated Asp-tRNA(Asn) or Glu-tRNA(Gln) in organisms which lack either or both of asparaginyl-tRNA or glutaminyl-tRNA synthetases. The reaction takes place in the presence of glutamine and ATP through an activated phospho-Asp-tRNA(Asn) or phospho-Glu-tRNA(Gln). This Janthinobacterium sp. (strain Marseille) (Minibacterium massiliensis) protein is Aspartyl/glutamyl-tRNA(Asn/Gln) amidotransferase subunit B.